The sequence spans 977 residues: MASQSEPGYLAAAQSDPGSNSERSTDSPVAGSEDDLVAAAPLLHSPEWSEERFRVDRKKLEAMLQAAAEGKGRSGEDFFQKIMEETNTQIAWPSKLKIGAKSKKDPHIKVSGKKEDVKEAKEMIMSVLDTKSNRVTLKMDVSHTEHSHVIGKGGNNIKKVMEDTGCHIHFPDSNRNNQAEKSNQVSIAGQPAGVESARARIRELLPLVLMFELPIAGILQPVPDPNTPSIQHISQTYSVSVSFKQRSRMYGATVTVRGSQNNTNAVKEGTAMLLEHLAGSLASAIPVSTQLDIAAQHHLFMMGRNGSNVKHIMQRTGAQIHFPDPSNPQKKSTVYLQGTIESVCLARQYLMGCLPLVLMFDMKEDIEVDPQVIAQLMEQLDVFISIKPKPKQPSKSVIVKSVERNALNMYEARKCLLGLESSGVSIATSLSPASCPAGLACPSLDILASAGLGLTGLGLLGPTTLSLNTSATPNSLLNALNTSVSPLQSSSSGTPSPTLWAPPIANTASATGFSTIPHLMLPSTAQATLTNILLSGVPTYGHTAPSPPPGLTPVDVHINSMQTEGKNISASINGHVQPANMKYGPLSTSSLGEKVLSSNHGDPSMQTAGPEQASPKSNSVEGCNDAFVEVGMPRSPSHSGNAGDLKQMLGASKVSCAKRQTVELLQGTKNSHLHGTDRLLSDPELSATESPLADKKAPGSERAAERAAAAQQKSERARLASQPTYVHMQAFDYEQKKLLATKAMLKKPVVTEVRTPTNTWSGLGFSKSMPAETIKELRRANHVSYKPTMTTAYEGSSLSLSRSSSREHLASGSESDNWRDRNGIGPMGHSEFSAPIGSPKRKQNKSREHYLSSSNYMDCISSLTGSNGCNLNSCFKGSDLPELFSKLGLGKYTDVFQQQEIDLQTFLTLTDQDLKELGITTFGARRKMLLAISELSKNRRKLFEPPNASCTSFLEGGASGRLPRQYHSDIASVSGRW.

Positions 1–43 (MASQSEPGYLAAAQSDPGSNSERSTDSPVAGSEDDLVAAAPLL) are disordered. 3 positions are modified to phosphoserine: Ser27, Ser32, and Ser45. KH domains follow at residues 134–201 (RVTL…RARI) and 286–350 (PVST…RQYL). Lys400 carries the N6-acetyllysine modification. The span at 590–621 (SLGEKVLSSNHGDPSMQTAGPEQASPKSNSVE) shows a compositional bias: polar residues. 3 disordered regions span residues 590–622 (SLGEKVLSSNHGDPSMQTAGPEQASPKSNSVEG), 667–702 (GTKNSHLHGTDRLLSDPELSATESPLADKKAPGSER), and 794–848 (EGSS…KSRE). Phosphoserine is present on residues Ser614 and Ser681. Basic and acidic residues predominate over residues 692 to 702 (LADKKAPGSER). Residues 794-803 (EGSSLSLSRS) show a composition bias toward low complexity. The region spanning 875–938 (FKGSDLPELF…LLAISELSKN (64 aa)) is the SAM domain.

It belongs to the BicC family. In terms of assembly, interacts (via KH domains) with ANKS6 (via SAM domain) in an RNA-dependent manner. Interacts with ANKS3. In terms of tissue distribution, in the adult, predominantly expressed in heart and kidney. In 8 week old mice, expressed in growing primary oocytes and in the stromal cells of the theca.

It localises to the cytoplasm. Its function is as follows. Putative RNA-binding protein. May be involved in regulating gene expression during embryonic development. In Mus musculus (Mouse), this protein is Protein bicaudal C homolog 1 (Bicc1).